Reading from the N-terminus, the 976-residue chain is Leucine--tRNA ligase (976 aa).

The span at 1–23 (MTESPTTTPGSTSGAPSGVPSGV) shows a compositional bias: low complexity. Residues 1–34 (MTESPTTTPGSTSGAPSGVPSGVNDAESDAPRHR) are disordered. Residues 86-97 (PYPSGEGLHVGH) carry the 'HIGH' region motif. A 'KMSKS' region motif is present at residues 745–749 (KIGKS). Residue Lys748 coordinates ATP.

This sequence belongs to the class-I aminoacyl-tRNA synthetase family.

It is found in the cytoplasm. It catalyses the reaction tRNA(Leu) + L-leucine + ATP = L-leucyl-tRNA(Leu) + AMP + diphosphate. The chain is Leucine--tRNA ligase from Mycobacterium marinum (strain ATCC BAA-535 / M).